Reading from the N-terminus, the 211-residue chain is Small ribosomal subunit protein eS1 (211 aa).

Positions 192–211 are disordered; that stretch reads NGLPPYEAVGDRATPELASY.

Belongs to the eukaryotic ribosomal protein eS1 family.

The sequence is that of Small ribosomal subunit protein eS1 from Methanopyrus kandleri (strain AV19 / DSM 6324 / JCM 9639 / NBRC 100938).